We begin with the raw amino-acid sequence, 297 residues long: Protoheme IX farnesyltransferase 1 (297 aa).

9 helical membrane passes run 23-43 (VVVLMLITSLAGMFLATRAGV), 45-65 (WSVLLFGNLGIGLCAGGAAVV), 93-113 (LPALLFALALALLGMVLLLVF), 117-137 (LTAWLTLASLLGYAVLYTGFL), 145-165 (IVIGGLAGAAPPLLGWVAVSG), 171-191 (PLLLVLIIFAWTPPHFWALAI), 216-236 (LHILLYTLILLAVSLLPYAIH), 241-261 (LYLACALGLGLRFLHWAWVLY), and 277-297 (IGYLFALFIALLLDHYLLLSL).

Belongs to the UbiA prenyltransferase family. Protoheme IX farnesyltransferase subfamily.

It is found in the cell inner membrane. The enzyme catalyses heme b + (2E,6E)-farnesyl diphosphate + H2O = Fe(II)-heme o + diphosphate. Its pathway is porphyrin-containing compound metabolism; heme O biosynthesis; heme O from protoheme: step 1/1. Converts heme B (protoheme IX) to heme O by substitution of the vinyl group on carbon 2 of heme B porphyrin ring with a hydroxyethyl farnesyl side group. The polypeptide is Protoheme IX farnesyltransferase 1 (Pseudomonas putida (strain ATCC 700007 / DSM 6899 / JCM 31910 / BCRC 17059 / LMG 24140 / F1)).